Here is a 391-residue protein sequence, read N- to C-terminus: 3-ketoacyl-CoA thiolase (391 aa).

C95 (acyl-thioester intermediate) is an active-site residue. Residues H347 and C377 each act as proton acceptor in the active site.

This sequence belongs to the thiolase-like superfamily. Thiolase family. Heterotetramer of two alpha chains (FadB) and two beta chains (FadA).

Its subcellular location is the cytoplasm. It carries out the reaction an acyl-CoA + acetyl-CoA = a 3-oxoacyl-CoA + CoA. The protein operates within lipid metabolism; fatty acid beta-oxidation. In terms of biological role, catalyzes the final step of fatty acid oxidation in which acetyl-CoA is released and the CoA ester of a fatty acid two carbons shorter is formed. The protein is 3-ketoacyl-CoA thiolase of Pseudomonas syringae pv. syringae (strain B728a).